Here is a 318-residue protein sequence, read N- to C-terminus: Acetyl-coenzyme A carboxylase carboxyl transferase subunit alpha (318 aa).

One can recognise a CoA carboxyltransferase C-terminal domain in the interval 31–292 (DLIKEVSALE…KDAILRQLEL (262 aa)).

This sequence belongs to the AccA family. As to quaternary structure, acetyl-CoA carboxylase is a heterohexamer composed of biotin carboxyl carrier protein (AccB), biotin carboxylase (AccC) and two subunits each of ACCase subunit alpha (AccA) and ACCase subunit beta (AccD).

Its subcellular location is the cytoplasm. It carries out the reaction N(6)-carboxybiotinyl-L-lysyl-[protein] + acetyl-CoA = N(6)-biotinyl-L-lysyl-[protein] + malonyl-CoA. It participates in lipid metabolism; malonyl-CoA biosynthesis; malonyl-CoA from acetyl-CoA: step 1/1. Component of the acetyl coenzyme A carboxylase (ACC) complex. First, biotin carboxylase catalyzes the carboxylation of biotin on its carrier protein (BCCP) and then the CO(2) group is transferred by the carboxyltransferase to acetyl-CoA to form malonyl-CoA. This chain is Acetyl-coenzyme A carboxylase carboxyl transferase subunit alpha, found in Hydrogenovibrio crunogenus (strain DSM 25203 / XCL-2) (Thiomicrospira crunogena).